A 393-amino-acid chain; its full sequence is Short-chain dehydrogenase/reductase family 42E member 1 (393 aa).

The active-site Proton acceptor is Y152. K156 contacts NAD(+). The next 2 helical transmembrane spans lie at 282-302 (LPLT…FILG) and 371-391 (GLLV…SVIL).

The protein belongs to the 3-beta-HSD family.

The protein resides in the membrane. This chain is Short-chain dehydrogenase/reductase family 42E member 1 (SDR42E1), found in Macaca fascicularis (Crab-eating macaque).